The primary structure comprises 110 residues: DNA-binding protein Mhun_3016 (110 aa).

This sequence belongs to the PDCD5 family.

The polypeptide is DNA-binding protein Mhun_3016 (Methanospirillum hungatei JF-1 (strain ATCC 27890 / DSM 864 / NBRC 100397 / JF-1)).